A 483-amino-acid polypeptide reads, in one-letter code: Regulatory protein ViaA (483 aa).

Belongs to the ViaA family. As to quaternary structure, homodimer. Interacts with RavA.

Its subcellular location is the cytoplasm. Component of the RavA-ViaA chaperone complex, which may act on the membrane to optimize the function of some of the respiratory chains. ViaA stimulates the ATPase activity of RavA. The protein is Regulatory protein ViaA of Salmonella choleraesuis (strain SC-B67).